A 1017-amino-acid chain; its full sequence is Voltage-gated delayed rectifier potassium channel KCNH4 (1017 aa).

Over 1-232 (MPVMKGLLAP…YSIPKAVWDG (232 aa)) the chain is Cytoplasmic. In terms of domain architecture, PAS spans 14 to 90 (FLDTIATRFD…QRLQKALEGH (77 aa)). The 53-residue stretch at 93–145 (HRAEICFYRKDGSAFWCLLDMMPIKNELGEVVLFLFSFKDISQSGGPGLGSPG) folds into the PAC domain. The disordered stretch occupies residues 139 to 170 (PGLGSPGIHGDNNNHENSLGRRGASSRLRSTR). Residues 233-253 (LILLATFYVAVTVPYNVCFAG) traverse the membrane as a helical segment. The Extracellular portion of the chain corresponds to 254 to 262 (DDDTPITSR). Residues 263–283 (HTLVSDIAVEMLFILDIILNF) form a helical membrane-spanning segment. The Cytoplasmic segment spans residues 284-305 (RTTYVSQSGQVVSAPRSIGLHY). A helical transmembrane segment spans residues 306-326 (LATWFFVDLIAALPFDLLYVF). The Extracellular segment spans residues 327-334 (NITVTSLV). Residues 335-355 (HLLKTVRLLRLLRLLQKLERY) form a helical; Voltage-sensor membrane-spanning segment. At 356–364 (SQCSAVVLT) the chain is on the cytoplasmic side. The chain crosses the membrane as a helical span at residues 365–385 (LLMSVFALLAHWMACVWYVIG). At 386–427 (RREMEANDPLLWDIGWLHELGKRLEEPYVNGSAGGPSRRSAY) the chain is on the extracellular side. The N-linked (GlcNAc...) asparagine glycan is linked to Asn-415. The segment at residues 428-448 (IAALYFTLSSLTSVGFGNVCA) is an intramembrane region (pore-forming). The Selectivity filter motif lies at 440 to 445 (SVGFGN). Residues 449 to 454 (NTDAEK) are Extracellular-facing. The chain crosses the membrane as a helical span at residues 455 to 475 (IFSICTMLIGALMHAVVFGNV). The Cytoplasmic portion of the chain corresponds to 476 to 1017 (TAIIQRMYSR…SFQSGSDTFH (542 aa)). The segment at 557–621 (LFGAASRGCL…AILGKGDLIG (65 aa)) is cNMP-binding domain. 2 disordered regions span residues 690–749 (GSEN…PNLS) and 771–870 (LVSS…ELAT). Polar residues predominate over residues 703–726 (PRLSQARSDTLGSSSDKTLPSITE). Composition is skewed to low complexity over residues 771–786 (LVSS…PALA) and 806–820 (PPQL…FGPP). The stretch at 873-907 (AEEVKEKVCRLNQEISRLNQEVSQLSRELRQVMGL) forms a coiled coil. Positions 972–1017 (SELRSSMVPPFPSEPDPLGPSPVPEASPLTPSLLKHSFQSGSDTFH) are disordered. Residues 980–996 (PPFPSEPDPLGPSPVPE) are compositionally biased toward pro residues. Residues 1008-1017 (SFQSGSDTFH) are compositionally biased toward polar residues.

Belongs to the potassium channel family. H (Eag) (TC 1.A.1.20) subfamily. Kv12.3/KCNH4 sub-subfamily. In terms of assembly, the potassium channel is probably composed of a homo- or heterotetrameric complex of pore-forming alpha subunits that can associate with modulating beta subunits. As to expression, highly expressed in adult testis, and in adult and embryonic brain. In adult brain found in piriform cortex, olfactory tubercle, cerebral cortex, hippocampus pyramidial cells and dentate gyrus and basal ganglia of caudate/putamen and accumbens nucleus. Detected at intermediate levels in lung, spinal cord, and pituitary.

It localises to the membrane. It carries out the reaction K(+)(in) = K(+)(out). Its function is as follows. Pore-forming (alpha) subunit of a voltage-gated delayed rectifier. Activates at more negative voltages, exhibits fast prepulse-independent activation kinetics and deactivates much more slowly, but shows no inactivation. This chain is Voltage-gated delayed rectifier potassium channel KCNH4, found in Rattus norvegicus (Rat).